The chain runs to 218 residues: Claudin-3 (218 aa).

At 1–8 (MSMGLEIA) the chain is on the cytoplasmic side. Residues 9-29 (GTSLAVLGWLSTIVCCALPMW) traverse the membrane as a helical segment. At 30-80 (RVTAFIGSSIITAQITWEGLWMNCVVQSTGQMQCKVYDSLLALPQDLQAAR) the chain is on the extracellular side. The helical transmembrane segment at 81–101 (ALIVVSILLAAFGLLVALVGA) threads the bilayer. The Cytoplasmic portion of the chain corresponds to 102–115 (QCTNCVQDDTAKAK). Residues 116–136 (ITIVAGVLFLLAALLTLVPVS) form a helical membrane-spanning segment. The Extracellular segment spans residues 137–159 (WSANTIIRDFYNPLVPDAQKREM). The chain crosses the membrane as a helical span at residues 160-180 (GAGLYVGWAAAALQLLGGALL). Over 181–218 (CCSCPPRDKKYAPTKIVYSAPRSAGPGTSTAYDRKDYV) the chain is Cytoplasmic. At Y198 the chain carries Phosphotyrosine. 2 positions are modified to phosphoserine: S199 and S209. The interval 217-218 (YV) is interactions with TJP1, TJP2 and TJP3.

The protein belongs to the claudin family. As to quaternary structure, can form homo- and heteropolymers with other CLDN. Homopolymers interact with CLDN1 and CLDN2 homopolymers. Interacts in cis (within the same plasma membrane) with CLDN19. Directly interacts with TJP1/ZO-1, TJP2/ZO-2 and TJP3/ZO-3.

Its subcellular location is the cell junction. It is found in the tight junction. It localises to the cell membrane. Functionally, plays a major role in tight junction-specific obliteration of the intercellular space, through calcium-independent cell-adhesion activity. The polypeptide is Claudin-3 (CLDN3) (Canis lupus familiaris (Dog)).